Here is a 152-residue protein sequence, read N- to C-terminus: Xanthine-guanine phosphoribosyltransferase (152 aa).

Residues 37–38 (RG), Arg-69, and 88–96 (DDLVDTGGT) contribute to the 5-phospho-alpha-D-ribose 1-diphosphate site. Arg-69 contacts GMP. Asp-89 lines the Mg(2+) pocket. Asp-92 and Ile-135 together coordinate guanine. Residues Asp-92 and Ile-135 each coordinate xanthine. Residues 92–96 (DTGGT) and 134–135 (WI) contribute to the GMP site.

This sequence belongs to the purine/pyrimidine phosphoribosyltransferase family. XGPT subfamily. In terms of assembly, homotetramer. It depends on Mg(2+) as a cofactor.

It is found in the cell inner membrane. The catalysed reaction is GMP + diphosphate = guanine + 5-phospho-alpha-D-ribose 1-diphosphate. It carries out the reaction XMP + diphosphate = xanthine + 5-phospho-alpha-D-ribose 1-diphosphate. The enzyme catalyses IMP + diphosphate = hypoxanthine + 5-phospho-alpha-D-ribose 1-diphosphate. The protein operates within purine metabolism; GMP biosynthesis via salvage pathway; GMP from guanine: step 1/1. Its pathway is purine metabolism; XMP biosynthesis via salvage pathway; XMP from xanthine: step 1/1. Functionally, purine salvage pathway enzyme that catalyzes the transfer of the ribosyl-5-phosphate group from 5-phospho-alpha-D-ribose 1-diphosphate (PRPP) to the N9 position of the 6-oxopurines guanine and xanthine to form the corresponding ribonucleotides GMP (guanosine 5'-monophosphate) and XMP (xanthosine 5'-monophosphate), with the release of PPi. To a lesser extent, also acts on hypoxanthine. The protein is Xanthine-guanine phosphoribosyltransferase of Shigella boydii serotype 18 (strain CDC 3083-94 / BS512).